Reading from the N-terminus, the 577-residue chain is MRISISSVVSSTTSRFVHRNLQGKGNPRIAPSSIDLCGMCYWGRAFSSGSGDYREILRNGLHSMKLDDAIGLFGGMVKSRPLPSIFEFNKLLSAIAKMKKFDLVISLGEKMQRLGISHNLYTYNILINCFCRRSQISLALALLGKMMKLGYEPSIVTLSSLLNGYCHGKRISDAVALVDQMVEMGYRPDTITFTTLIHGLFLHNKASEAVALVDRMVQRGCQPNLVTYGVVVNGLCKRGDIDLAFNLLNKMEAAKIEANVVIYSTVIDSLCKYRHEDDALNLFTEMENKGVRPNVITYSSLISCLCNYERWSDASRLLSDMIERKINPNVVTFNALIDAFVKEGKLVEAEKLYDEMIKRSIDPDIFTYSSLINGFCMHDRLDEAKHMFELMISKDCFPNVVTYNTLINGFCKAKRIDEGVELFREMSQRGLVGNTVTYTTLIHGFFQARDCDNAQMVFKQMVSDGVHPNIMTYNTLLDGLCKNGKLEKAMVVFEYLQRSKMEPTIYTYNIMIEGMCKAGKVEDGWDLFCSLSLKGVKPDVIIYNTMISGFCRKGLKEEADALFRKMREDGPLPDSGT.

PPR repeat units lie at residues 49–83, 84–118, 119–153, 154–188, 189–223, 224–258, 259–293, 294–328, 329–363, 364–398, 399–433, 434–468, 469–503, 504–538, and 539–573; these read GSGD…RPLP, SIFE…GISH, NLYT…GYEP, SIVT…GYRP, DTIT…GCQP, NLVT…KIEA, NVVI…GVRP, NVIT…KINP, NVVT…SIDP, DIFT…DCFP, NVVT…GLVG, NTVT…GVHP, NIMT…KMEP, TIYT…GVKP, and DVII…GPLP.

It belongs to the PPR family. P subfamily.

In Arabidopsis thaliana (Mouse-ear cress), this protein is Pentatricopeptide repeat-containing protein At1g63400.